The chain runs to 190 residues: ATP synthase subunit delta (190 aa).

The protein belongs to the ATPase delta chain family. In terms of assembly, F-type ATPases have 2 components, F(1) - the catalytic core - and F(0) - the membrane proton channel. F(1) has five subunits: alpha(3), beta(3), gamma(1), delta(1), epsilon(1). F(0) has three main subunits: a(1), b(2) and c(10-14). The alpha and beta chains form an alternating ring which encloses part of the gamma chain. F(1) is attached to F(0) by a central stalk formed by the gamma and epsilon chains, while a peripheral stalk is formed by the delta and b chains.

The protein resides in the cell inner membrane. Its function is as follows. F(1)F(0) ATP synthase produces ATP from ADP in the presence of a proton or sodium gradient. F-type ATPases consist of two structural domains, F(1) containing the extramembraneous catalytic core and F(0) containing the membrane proton channel, linked together by a central stalk and a peripheral stalk. During catalysis, ATP synthesis in the catalytic domain of F(1) is coupled via a rotary mechanism of the central stalk subunits to proton translocation. In terms of biological role, this protein is part of the stalk that links CF(0) to CF(1). It either transmits conformational changes from CF(0) to CF(1) or is implicated in proton conduction. This chain is ATP synthase subunit delta, found in Methylobacterium radiotolerans (strain ATCC 27329 / DSM 1819 / JCM 2831 / NBRC 15690 / NCIMB 10815 / 0-1).